The chain runs to 183 residues: Putative 3-methyladenine DNA glycosylase (183 aa).

It belongs to the DNA glycosylase MPG family.

The protein is Putative 3-methyladenine DNA glycosylase of Rickettsia rickettsii (strain Iowa).